A 450-amino-acid polypeptide reads, in one-letter code: uncharacterized protein (450 aa).

The 58-residue stretch at Met1–Lys58 folds into the TRAM domain. The S-adenosyl-L-methionine site is built by Gln280, Tyr309, Glu330, and Asp378. The active-site Nucleophile is the Cys405.

This sequence belongs to the class I-like SAM-binding methyltransferase superfamily. RNA M5U methyltransferase family.

This is an uncharacterized protein from Lactobacillus johnsonii (strain CNCM I-12250 / La1 / NCC 533).